The chain runs to 142 residues: Large ribosomal subunit protein uL16 (142 aa).

This sequence belongs to the universal ribosomal protein uL16 family. As to quaternary structure, part of the 50S ribosomal subunit.

In terms of biological role, binds 23S rRNA and is also seen to make contacts with the A and possibly P site tRNAs. This chain is Large ribosomal subunit protein uL16, found in Thermotoga sp. (strain RQ2).